The sequence spans 319 residues: Cobalamin biosynthesis protein CobD (319 aa).

A run of 5 helical transmembrane segments spans residues 56–76 (VMWL…LALA), 78–98 (GIHP…ALAG), 153–173 (VDGI…LAMA), 204–224 (VANF…AVLC), and 296–316 (LMWV…YWLV).

It belongs to the CobD/CbiB family.

The protein localises to the cell membrane. The protein operates within cofactor biosynthesis; adenosylcobalamin biosynthesis. Functionally, converts cobyric acid to cobinamide by the addition of aminopropanol on the F carboxylic group. The polypeptide is Cobalamin biosynthesis protein CobD (Klebsiella pneumoniae subsp. pneumoniae (strain ATCC 700721 / MGH 78578)).